The primary structure comprises 1757 residues: E3 ubiquitin-protein ligase UBR1 (1757 aa).

Residues 1–24 (MADEEMDGAERMDVSPEPPLAPQR) form a disordered region. Alanine 2 bears the N-acetylalanine mark. Residues 97 to 168 (QLCGKVFKSG…TGPFCVDHEP (72 aa)) form a UBR-type zinc finger. Zn(2+) contacts are provided by cysteine 99, cysteine 112, cysteine 115, cysteine 124, cysteine 127, histidine 133, and histidine 136. Phenylalanine 148 serves as a coordination point for a peptide. A Zn(2+)-binding site is contributed by cysteine 149. Aspartate 150 lines the a peptide pocket. Cysteine 151 is a binding site for Zn(2+). Aspartate 153 serves as a coordination point for a peptide. Zn(2+)-binding residues include cysteine 163 and histidine 166. Residues 842–868 (QHSKAEHMQKKRRKQENKDEALPPPPP) form a disordered region. A UBC2-binding region (U2BR) region spans residues 1022–1057 (RKRKAEAARLHRQKIMAQMSALQKNFIETHKLMYDN). Zn(2+) is bound by residues cysteine 1101, cysteine 1104, cysteine 1162, histidine 1164, histidine 1167, and cysteine 1170. The RING-type; atypical zinc finger occupies 1101–1204 (CILCQEEQEV…SGEYLCPLCK (104 aa)). Serine 1182 is subject to Phosphoserine. Cysteine 1200, cysteine 1203, cysteine 1635, cysteine 1638, and cysteine 1661 together coordinate Zn(2+).

Belongs to the E3 ubiquitin-protein ligase UBR1-like family. In terms of assembly, interacts with RECQL4. Present in skeletal muscle and liver (at protein level). Broadly expressed, with highest levels in skeletal muscle and heart. Expressed in acinar cells of the pancreas. In testes, expressed primarily in spermatogonia.

The protein resides in the cytoplasm. It localises to the cytosol. The catalysed reaction is S-ubiquitinyl-[E2 ubiquitin-conjugating enzyme]-L-cysteine + [acceptor protein]-L-lysine = [E2 ubiquitin-conjugating enzyme]-L-cysteine + N(6)-ubiquitinyl-[acceptor protein]-L-lysine.. It participates in protein modification; protein ubiquitination. Its function is as follows. E3 ubiquitin-protein ligase which is a component of the N-end rule pathway. Recognizes and binds proteins bearing specific N-terminal residues (N-degrons) that are destabilizing according to the N-end rule, leading to their ubiquitination and subsequent degradation. Recognizes both type-1 and type-2 N-degrons, containing positively charged amino acids (Arg, Lys and His) and bulky and hydrophobic amino acids, respectively. Does not ubiquitinate proteins that are acetylated at the N-terminus. In contrast, it strongly binds methylated N-degrons. Binds leucine and is a negative regulator of the leucine-mTOR signaling pathway, thereby controlling cell growth. In Mus musculus (Mouse), this protein is E3 ubiquitin-protein ligase UBR1.